Here is a 472-residue protein sequence, read N- to C-terminus: ATP synthase subunit beta (472 aa).

ATP is bound at residue 156–163; sequence GGAGVGKT.

The protein belongs to the ATPase alpha/beta chains family. In terms of assembly, F-type ATPases have 2 components, CF(1) - the catalytic core - and CF(0) - the membrane proton channel. CF(1) has five subunits: alpha(3), beta(3), gamma(1), delta(1), epsilon(1). CF(0) has three main subunits: a(1), b(2) and c(9-12). The alpha and beta chains form an alternating ring which encloses part of the gamma chain. CF(1) is attached to CF(0) by a central stalk formed by the gamma and epsilon chains, while a peripheral stalk is formed by the delta and b chains.

It localises to the cell membrane. The enzyme catalyses ATP + H2O + 4 H(+)(in) = ADP + phosphate + 5 H(+)(out). Functionally, produces ATP from ADP in the presence of a proton gradient across the membrane. The catalytic sites are hosted primarily by the beta subunits. This Symbiobacterium thermophilum (strain DSM 24528 / JCM 14929 / IAM 14863 / T) protein is ATP synthase subunit beta.